Reading from the N-terminus, the 287-residue chain is MQHPHRCPECDGTIRETDTEHVCADCGLVVTDAPIDHGPEWRTFSDDPDHAPERTGAPLTRSRHDRGLSTEIGYSARLTGRKRRKFARLRRQHKRATIPSKADYNRIYGFTEIRRLIGTFGIGTGLRDQACTLFASAQTAGLLHGRTIEGFAAAGVYATCRTNGVTRTLDEIAAAARATRPELTTAYDAMNRDLGLPTGPIDPREYLPRYADALSLPARIERQARELVAALETDGLVAGRNPSGVAAGCLYTAATETDHAVTQSAAAAVADVTPVTLRATYQNLTDA.

A TFIIB-type zinc finger spans residues 3–31; that stretch reads HPHRCPECDGTIRETDTEHVCADCGLVVT. The Zn(2+) site is built by cysteine 7, cysteine 10, cysteine 23, and cysteine 26. Residues 40–53 are compositionally biased toward basic and acidic residues; the sequence is EWRTFSDDPDHAPE. Residues 40 to 63 form a disordered region; it reads EWRTFSDDPDHAPERTGAPLTRSR. 2 repeat units span residues 111–194 and 205–286.

The protein belongs to the TFIIB family.

In terms of biological role, stabilizes TBP binding to an archaeal box-A promoter. Also responsible for recruiting RNA polymerase II to the pre-initiation complex (DNA-TBP-TFIIB). This chain is Transcription initiation factor IIB 1, found in Halobacterium salinarum (strain ATCC 700922 / JCM 11081 / NRC-1) (Halobacterium halobium).